We begin with the raw amino-acid sequence, 130 residues long: Histone H2A type 1-F (130 aa).

A disordered region spans residues 1 to 22 (MSGRGKQGGKARAKAKTRSSRA). Ser-2 carries the phosphoserine; by RPS6KA5 modification. At Arg-4 the chain carries Citrulline; alternate. Position 4 is a symmetric dimethylarginine; by PRMT5; alternate (Arg-4). 2 positions are modified to N6-(2-hydroxyisobutyryl)lysine: Lys-6 and Lys-10. Residues 7–19 (QGGKARAKAKTRS) are compositionally biased toward basic residues. Lys-10 is modified (N6-lactoyllysine; alternate). The residue at position 37 (Lys-37) is an N6-(2-hydroxyisobutyryl)lysine; alternate. Lys-37 is subject to N6-(beta-hydroxybutyryl)lysine; alternate. Residue Lys-37 is modified to N6-crotonyllysine; alternate. 3 positions are modified to N6-(2-hydroxyisobutyryl)lysine: Lys-75, Lys-76, and Lys-96. N6-glutaryllysine; alternate is present on Lys-96. Residue Gln-105 is modified to N5-methylglutamine. The residue at position 119 (Lys-119) is an N6-(2-hydroxyisobutyryl)lysine; alternate. 2 positions are modified to N6-crotonyllysine; alternate: Lys-119 and Lys-120. 2 positions are modified to N6-glutaryllysine; alternate: Lys-119 and Lys-120. Lys-120 participates in a covalent cross-link: Glycyl lysine isopeptide (Lys-Gly) (interchain with G-Cter in ubiquitin); alternate. Residue Thr-121 is modified to Phosphothreonine; by DCAF1. At Lys-126 the chain carries N6-crotonyllysine; alternate. Lys-126 bears the N6-glutaryllysine; alternate mark.

This sequence belongs to the histone H2A family. In terms of assembly, the nucleosome is a histone octamer containing two molecules each of H2A, H2B, H3 and H4 assembled in one H3-H4 heterotetramer and two H2A-H2B heterodimers. The octamer wraps approximately 147 bp of DNA. Deiminated on Arg-4 in granulocytes upon calcium entry. In terms of processing, monoubiquitination of Lys-120 (H2AK119Ub) by RING1, TRIM37 and RNF2/RING2 complex gives a specific tag for epigenetic transcriptional repression and participates in X chromosome inactivation of female mammals. It is involved in the initiation of both imprinted and random X inactivation. Ubiquitinated H2A is enriched in inactive X chromosome chromatin. Ubiquitination of H2A functions downstream of methylation of 'Lys-27' of histone H3 (H3K27me). H2AK119Ub by RNF2/RING2 can also be induced by ultraviolet and may be involved in DNA repair. Following DNA double-strand breaks (DSBs), it is ubiquitinated through 'Lys-63' linkage of ubiquitin moieties by the E2 ligase UBE2N and the E3 ligases RNF8 and RNF168, leading to the recruitment of repair proteins to sites of DNA damage. Ubiquitination at Lys-14 and Lys-16 (H2AK13Ub and H2AK15Ub, respectively) in response to DNA damage is initiated by RNF168 that mediates monoubiquitination at these 2 sites, and 'Lys-63'-linked ubiquitin are then conjugated to monoubiquitin; RNF8 is able to extend 'Lys-63'-linked ubiquitin chains in vitro. H2AK119Ub and ionizing radiation-induced 'Lys-63'-linked ubiquitination (H2AK13Ub and H2AK15Ub) are distinct events. Post-translationally, phosphorylation on Ser-2 (H2AS1ph) is enhanced during mitosis. Phosphorylation on Ser-2 by RPS6KA5/MSK1 directly represses transcription. Acetylation of H3 inhibits Ser-2 phosphorylation by RPS6KA5/MSK1. Phosphorylation at Thr-121 (H2AT120ph) by DCAF1 is present in the regulatory region of many tumor suppresor genes and down-regulates their transcription. Symmetric dimethylation on Arg-4 by the PRDM1/PRMT5 complex may play a crucial role in the germ-cell lineage. In terms of processing, glutamine methylation at Gln-105 (H2AQ104me) by FBL is specifically dedicated to polymerase I. It is present at 35S ribosomal DNA locus and impairs binding of the FACT complex. Post-translationally, crotonylation (Kcr) is specifically present in male germ cells and marks testis-specific genes in post-meiotic cells, including X-linked genes that escape sex chromosome inactivation in haploid cells. Crotonylation marks active promoters and enhancers and confers resistance to transcriptional repressors. It is also associated with post-meiotically activated genes on autosomes. Lactylated in macrophages by EP300/P300 by using lactoyl-CoA directly derived from endogenous or exogenous lactate, leading to stimulates gene transcription.

The protein localises to the nucleus. The protein resides in the chromosome. Functionally, core component of nucleosome. Nucleosomes wrap and compact DNA into chromatin, limiting DNA accessibility to the cellular machineries which require DNA as a template. Histones thereby play a central role in transcription regulation, DNA repair, DNA replication and chromosomal stability. DNA accessibility is regulated via a complex set of post-translational modifications of histones, also called histone code, and nucleosome remodeling. This Rattus norvegicus (Rat) protein is Histone H2A type 1-F.